The sequence spans 510 residues: ATP synthase subunit alpha, chloroplastic (510 aa).

Residue 170-177 (GDRQTGKT) participates in ATP binding.

It belongs to the ATPase alpha/beta chains family. F-type ATPases have 2 components, CF(1) - the catalytic core - and CF(0) - the membrane proton channel. CF(1) has five subunits: alpha(3), beta(3), gamma(1), delta(1), epsilon(1). CF(0) has four main subunits: a, b, b' and c.

The protein localises to the plastid. Its subcellular location is the chloroplast thylakoid membrane. It catalyses the reaction ATP + H2O + 4 H(+)(in) = ADP + phosphate + 5 H(+)(out). Functionally, produces ATP from ADP in the presence of a proton gradient across the membrane. The alpha chain is a regulatory subunit. This chain is ATP synthase subunit alpha, chloroplastic, found in Phaseolus vulgaris (Kidney bean).